A 390-amino-acid polypeptide reads, in one-letter code: Protein-glutamate methylesterase/protein-glutamine glutaminase 1 (390 aa).

The Response regulatory domain maps to 4–121 (KVLVVDDSGF…SRNPQKVKQL (118 aa)). Residue aspartate 55 is modified to 4-aspartylphosphate. A compositionally biased stretch (low complexity) spans 132-186 (SNRRSSGIGSASAASPAPAAPAPSTLSSRAPAPSAAAPARAVPSRTVAPAAAPAA). Residues 132–201 (SNRRSSGIGS…PAHPTTTGTA (70 aa)) form a disordered region. Positions 195–387 (PTTTGTAKRK…LDDIGRHLVE (193 aa)) constitute a CheB-type methylesterase domain. Residues serine 214, histidine 241, and aspartate 334 contribute to the active site.

This sequence belongs to the CheB family. In terms of processing, phosphorylated by CheA. Phosphorylation of the N-terminal regulatory domain activates the methylesterase activity.

It localises to the cytoplasm. It carries out the reaction [protein]-L-glutamate 5-O-methyl ester + H2O = L-glutamyl-[protein] + methanol + H(+). It catalyses the reaction L-glutaminyl-[protein] + H2O = L-glutamyl-[protein] + NH4(+). Its function is as follows. Involved in chemotaxis. Part of a chemotaxis signal transduction system that modulates chemotaxis in response to various stimuli. Catalyzes the demethylation of specific methylglutamate residues introduced into the chemoreceptors (methyl-accepting chemotaxis proteins or MCP) by CheR. Also mediates the irreversible deamidation of specific glutamine residues to glutamic acid. The sequence is that of Protein-glutamate methylesterase/protein-glutamine glutaminase 1 from Pseudomonas syringae pv. tomato (strain ATCC BAA-871 / DC3000).